The following is a 713-amino-acid chain: Protein tyrosine phosphatase domain-containing protein 1 (713 aa).

The Tyrosine-protein phosphatase domain maps to 80–251 (YSSWITDHLL…LVPLRSVFSC (172 aa)). The active-site Phosphocysteine intermediate is the C188.

Belongs to the protein-tyrosine phosphatase family. Non-receptor class PTPDC1 subfamily.

May play roles in cilia formation and/or maintenance. This is Protein tyrosine phosphatase domain-containing protein 1 (ptpdc1) from Danio rerio (Zebrafish).